A 406-amino-acid polypeptide reads, in one-letter code: Formate-dependent phosphoribosylglycinamide formyltransferase (406 aa).

N(1)-(5-phospho-beta-D-ribosyl)glycinamide is bound by residues 27–28 (EL) and E87. Residues R120, K162, 167–172 (SSGKGQ), 202–205 (EGFI), and E210 each bind ATP. One can recognise an ATP-grasp domain in the interval 125-320 (RLAAETLGLP…EFELHARALL (196 aa)). Residues E279 and E291 each coordinate Mg(2+). N(1)-(5-phospho-beta-D-ribosyl)glycinamide is bound by residues D298, K367, and 374 to 375 (RR).

It belongs to the PurK/PurT family. As to quaternary structure, homodimer.

The enzyme catalyses N(1)-(5-phospho-beta-D-ribosyl)glycinamide + formate + ATP = N(2)-formyl-N(1)-(5-phospho-beta-D-ribosyl)glycinamide + ADP + phosphate + H(+). It participates in purine metabolism; IMP biosynthesis via de novo pathway; N(2)-formyl-N(1)-(5-phospho-D-ribosyl)glycinamide from N(1)-(5-phospho-D-ribosyl)glycinamide (formate route): step 1/1. Involved in the de novo purine biosynthesis. Catalyzes the transfer of formate to 5-phospho-ribosyl-glycinamide (GAR), producing 5-phospho-ribosyl-N-formylglycinamide (FGAR). Formate is provided by PurU via hydrolysis of 10-formyl-tetrahydrofolate. The polypeptide is Formate-dependent phosphoribosylglycinamide formyltransferase (Bordetella parapertussis (strain 12822 / ATCC BAA-587 / NCTC 13253)).